Here is a 570-residue protein sequence, read N- to C-terminus: Apyrase (570 aa).

An N-terminal signal peptide occupies residues 1–23 (MALVRFATIITVLCHLAIQDGAA). The a divalent metal cation site is built by D43, H45, and D94. N-linked (GlcNAc...) asparagine glycosylation is present at N108. Residues N126, H229, and H253 each coordinate a divalent metal cation. N287 and N326 each carry an N-linked (GlcNAc...) asparagine glycan. R367 serves as a coordination point for AMP. An N-linked (GlcNAc...) asparagine glycan is attached at N387. Residues R402 and D507 each contribute to the AMP site. N-linked (GlcNAc...) asparagine glycosylation is found at N552 and N555.

Belongs to the 5'-nucleotidase family. In terms of assembly, interacts with human PLAT; the interaction results in PLAT activation probably via an allosteric activation mechanism. Requires a divalent metal cation as cofactor. As to expression, saliva (at protein level). Salivary gland (at protein level). Not detected in midgut.

It is found in the secreted. It catalyses the reaction a ribonucleoside 5'-triphosphate + 2 H2O = a ribonucleoside 5'-phosphate + 2 phosphate + 2 H(+). In terms of biological role, cleaves adenosine triphosphate (ATP) and adenosine diphosphate (ADP) to adenosine monophosphate (AMP) and inorganic phosphate. Enhances fibrin degradation in the midgut blood bolus. Activates human tissue plasminogen activator (PLAT), probably via an allosteric activation mechanism. Inhibits ADP-mediated host platelet aggregation in vitro and in mosquito midgut. Inhibits host neutrophil activation in the mosquito midgut: reduces neutrophil extracellular traps formation in the presence of platelets and the formation of total cell- and mitochondrial-derived reactive oxygen species. Its function is as follows. (Microbial infection) Promotes Plasmodium berghei parasite transmission from the mammalian host to the mosquito probably by reducing the blood bolus viscosity. Facilitates sporozoite transmission from the mosquito to the mammalian host during blood feeding. The chain is Apyrase from Anopheles gambiae (African malaria mosquito).